A 753-amino-acid polypeptide reads, in one-letter code: Fatty acid oxidation complex subunit alpha (753 aa).

The tract at residues 8-197 (SVTHPAFTLN…KMGLVDDVVP (190 aa)) is enoyl-CoA hydratase. Residues 313–747 (RAIHRVGVLG…FYPVDANIDE (435 aa)) are 3-hydroxyacyl-CoA dehydrogenase. Residues 593–622 (SNPTLHSNSTKNSSPTKNGNSPAKRNSFKW) are disordered. Residues 599 to 614 (SNSTKNSSPTKNGNSP) are compositionally biased toward low complexity.

In the N-terminal section; belongs to the enoyl-CoA hydratase/isomerase family. It in the central section; belongs to the 3-hydroxyacyl-CoA dehydrogenase family. In terms of assembly, heterotetramer of two alpha chains (FadJ) and two beta chains (FadI).

The protein localises to the cytoplasm. The enzyme catalyses a (3S)-3-hydroxyacyl-CoA = a (2E)-enoyl-CoA + H2O. It carries out the reaction a 4-saturated-(3S)-3-hydroxyacyl-CoA = a (3E)-enoyl-CoA + H2O. The catalysed reaction is a (3S)-3-hydroxyacyl-CoA + NAD(+) = a 3-oxoacyl-CoA + NADH + H(+). It catalyses the reaction (3S)-3-hydroxybutanoyl-CoA = (3R)-3-hydroxybutanoyl-CoA. It functions in the pathway lipid metabolism; fatty acid beta-oxidation. Functionally, catalyzes the formation of a hydroxyacyl-CoA by addition of water on enoyl-CoA. Also exhibits 3-hydroxyacyl-CoA epimerase and 3-hydroxyacyl-CoA dehydrogenase activities. The sequence is that of Fatty acid oxidation complex subunit alpha from Yersinia pseudotuberculosis serotype I (strain IP32953).